The primary structure comprises 754 residues: FAD-dependent monooxygenase ntnA (754 aa).

Residues I3–L23 form a helical membrane-spanning segment. The FAD site is built by E34, G48, and R109. Y218 is an active-site residue. FAD-binding residues include D311 and A324. 4 consecutive transmembrane segments (helical) span residues P446 to A466, A486 to I506, I536 to M556, and L563 to C583. N586 carries an N-linked (GlcNAc...) asparagine glycan. A helical transmembrane segment spans residues S595–L615. The N-linked (GlcNAc...) asparagine glycan is linked to N616. Helical transmembrane passes span I644 to L664 and L679 to L697. An N-linked (GlcNAc...) asparagine glycan is attached at N701. A helical membrane pass occupies residues L712–I732.

The protein belongs to the paxM FAD-dependent monooxygenase family. Requires FAD as cofactor.

The protein localises to the membrane. It functions in the pathway secondary metabolite biosynthesis; terpenoid biosynthesis. Its function is as follows. FAD-dependent monooxygenase; part of the gene cluster that mediates the biosynthesis of the meroterpenoids nectripenoids A and B, as well as cochliquninone D and isocochliquninone E. The pathway probably begins with the HR-PKS ntnH that catalyzes two chain-extension steps to form a reduced triketide, which then primes the SAT domain in the NR-PKS ntnG to initiate three more cycles of extension to give a linear hexaketide corresponding to the polyketide part of nectripenoids. The FAD-dependent monooxygenase ntnJ then performs an oxidative decarboxylation at C11 of the ntnH/ntnG product, via an electrophilic aromatic hydroxylation with concomitant ipso-decarboxylation. The membrane-bound polyprenyl transferase ntnF then introduces a farnesyl group before the FAD-dependent monooxygenase ntnK functions as the first epoxidase on terminal C12'-C13' olefin, followed by a second epoxidation on C7'-C8' catalyzed by ntnA. The terpene cyclase/mutase ntnI then initiates the sequential tricyclic ring formation through protonation of the terminal epoxide and catalyzes the regioselective and stereoselective 6/6/6-tricyclic ring formation. The cytochrome P450 monooxygenase ntnM may then hydroxylate C1'. The chain is FAD-dependent monooxygenase ntnA from Nectria sp.